Consider the following 146-residue polypeptide: 3-dehydroquinate dehydratase (146 aa).

Tyr23 functions as the Proton acceptor in the catalytic mechanism. Asn74, His80, and Asp87 together coordinate substrate. His100 acts as the Proton donor in catalysis. Substrate-binding positions include 101 to 102 and Arg111; that span reads IS.

It belongs to the type-II 3-dehydroquinase family. As to quaternary structure, homododecamer.

The catalysed reaction is 3-dehydroquinate = 3-dehydroshikimate + H2O. It functions in the pathway metabolic intermediate biosynthesis; chorismate biosynthesis; chorismate from D-erythrose 4-phosphate and phosphoenolpyruvate: step 3/7. Catalyzes a trans-dehydration via an enolate intermediate. This chain is 3-dehydroquinate dehydratase, found in Bacillus cereus (strain ATCC 10987 / NRS 248).